The following is a 204-amino-acid chain: Large ribosomal subunit protein uL4 (204 aa).

The segment at 44–76 (KRQGTQSAKTRSEVRGGGIKPWRQKGTGRARQG) is disordered.

This sequence belongs to the universal ribosomal protein uL4 family. As to quaternary structure, part of the 50S ribosomal subunit.

One of the primary rRNA binding proteins, this protein initially binds near the 5'-end of the 23S rRNA. It is important during the early stages of 50S assembly. It makes multiple contacts with different domains of the 23S rRNA in the assembled 50S subunit and ribosome. Functionally, forms part of the polypeptide exit tunnel. This is Large ribosomal subunit protein uL4 from Clostridium perfringens (strain 13 / Type A).